The following is a 1165-amino-acid chain: TBC1 domain family member 1 (1165 aa).

Position 146 is a phosphoserine (Ser146). The tract at residues 207-234 (FSSDQSRSALQPPGDGERGPRPMRKSFS) is disordered. Ser232 is modified (phosphoserine; by PKB/AKT1). The residue at position 234 (Ser234) is a Phosphoserine; by AMPK. The PID domain occupies 243–401 (FRKEFQDAGL…LHKLCERIEG (159 aa)). Ser500 is modified (phosphoserine). Position 502 is a phosphothreonine; by PKB/AKT1 (Thr502). Phosphoserine occurs at positions 504, 522, 524, 562, 563, 567, 568, and 582. Thr593 carries the post-translational modification Phosphothreonine. Ser611 carries the post-translational modification Phosphoserine. Ser624 bears the Phosphoserine; by PKB/AKT1 mark. The tract at residues 624 to 651 (SVSTETPHERKDFESKADHISDASRTPV) is disordered. Basic and acidic residues predominate over residues 629–645 (TPHERKDFESKADHISD). Phosphoserine is present on residues Ser692 and Ser938. The Rab-GAP TBC domain occupies 797-991 (GVPRHHRGEI…RVFDMIFLQG (195 aa)). Tyr949 carries the post-translational modification Phosphotyrosine. Positions 1146-1165 (QTAELGSQESDPTLPKPSGD) are disordered.

In terms of assembly, interacts with APPL2 (via BAR domain); interaction is dependent of TBC1D1 phosphorylation at Ser-232; interaction diminishes the phosphorylation of TBC1D1 at Thr-593, resulting in inhibition of SLC2A4/GLUT4 translocation and glucose uptake. Post-translationally, insulin-stimulated phosphorylation by AKT family kinases stimulates SLC2A4/GLUT4 translocation.

Its subcellular location is the nucleus. May act as a GTPase-activating protein for Rab family protein(s). May play a role in the cell cycle and differentiation of various tissues. Involved in the trafficking and translocation of GLUT4-containing vesicles and insulin-stimulated glucose uptake into cells. The protein is TBC1 domain family member 1 (TBC1D1) of Bos taurus (Bovine).